The chain runs to 438 residues: Cyanidin-3-O-glucoside 2-O-glucuronosyltransferase (438 aa).

Residues serine 264, 315–316 (WV), 333–341 (HCGWSSTME), and 355–358 (QFDQ) contribute to the UDP-alpha-D-glucuronate site.

Belongs to the UDP-glycosyltransferase family. In terms of assembly, monomer. Expressed in petals. Not detected in sepals, stems, leaves, tubular corollas and white petals.

It is found in the cytoplasm. It catalyses the reaction cyanidin 3-O-beta-D-glucoside + UDP-alpha-D-glucuronate = cyanidin 3-O-(2-O-beta-D-glucuronosyl)-beta-D-glucoside + UDP + H(+). Its activity is regulated as follows. Inhibited by copper, mercury, UDP, UTP and partially by calcium, cadmium, iron and UMP. Not affected by cobalt, magnesium, manganese, zinc, nickel, tin, uridine, sadium malonate and glucose. Involved in the production of glucuronosylated anthocyanins that are the origin of the red coloration of flowers. Can use cyanidin 3-O-6''-O-malonylglucoside, cyanidin 3-O-glucoside and delphinidin 3-O-glucosideas substrates, but not pelargonidin 3-O-glucoside, cyanidin 3-O-3'',6''-O-dimalonylglucoside, pelargonidin 3,5-O-diglucoside, pelargonidin 3-O-6''-O-malonylglucoside-5-O-glucoside, quercetin 3-O-glucoside, quercetin 3-O-6''-O-malonylglucoside, daidzin, genistin,7-O-6''-O-malonylglucosides of daidzein and genistein, cyanidin, quercetin, daidzein, genistein p-Nitrophenyl beta-D-glucopyranoside, beta-estradiol, 17alpha-estradiol, 1-naphthol, 2-naphthol, 4-methylumbelliferone, and p-nitrophenol. Highly specific for UDP-glucuronate (UDP-GlcUA). Arg-25 is decisive with respect to UDP-sugar specificity. The chain is Cyanidin-3-O-glucoside 2-O-glucuronosyltransferase (UGAT) from Bellis perennis (English daisy).